We begin with the raw amino-acid sequence, 463 residues long: Metalloprotease slr0863 (463 aa).

The protein belongs to the peptidase U62 family.

In terms of biological role, probable metalloprotease. The protein is Metalloprotease slr0863 of Synechocystis sp. (strain ATCC 27184 / PCC 6803 / Kazusa).